The following is a 547-amino-acid chain: Phosphomethylpyrimidine synthase (547 aa).

Residues asparagine 146, methionine 175, tyrosine 204, histidine 240, 260–262, 301–304, and glutamate 340 each bind substrate; these read SRG and DGLR. Histidine 344 contacts Zn(2+). Tyrosine 367 contacts substrate. Histidine 408 contributes to the Zn(2+) binding site. [4Fe-4S] cluster contacts are provided by cysteine 488, cysteine 491, and cysteine 496.

Belongs to the ThiC family. The cofactor is [4Fe-4S] cluster.

The catalysed reaction is 5-amino-1-(5-phospho-beta-D-ribosyl)imidazole + S-adenosyl-L-methionine = 4-amino-2-methyl-5-(phosphooxymethyl)pyrimidine + CO + 5'-deoxyadenosine + formate + L-methionine + 3 H(+). It participates in cofactor biosynthesis; thiamine diphosphate biosynthesis. Catalyzes the synthesis of the hydroxymethylpyrimidine phosphate (HMP-P) moiety of thiamine from aminoimidazole ribotide (AIR) in a radical S-adenosyl-L-methionine (SAM)-dependent reaction. The polypeptide is Phosphomethylpyrimidine synthase (Mycobacterium bovis (strain ATCC BAA-935 / AF2122/97)).